Here is a 482-residue protein sequence, read N- to C-terminus: MLPRHTDPIAAIATAPGRGAVGIVRVSGRGIGPLVEALCGRALRPREATYLPFRDAGGQAIDQGLALYFPAPHSYTGEDVLELQAHGGPVVLQLLLARCLQAAGEADRATGRPRLPGLRLARPGEFTERAFLNDKIDLAQAEAIADLIDASTEAAARSASRSLAGAFSDEIHRLRDALVHLRMLVEATLDFPEEEIDFLRKADAHGQLAALQRTLAEVMGRTRQGALLREGIKVVIAGQPNAGKSSLLNALAGAELAIVTPIAGTTRDKVQQTIQIEGVPLHVIDTAGLRESDDEVERIGIERAWQEIAAADAVLFLHDLTRAGQPDYEAADAEIAARLARMAPAHVPVVDVWNKSDRAEGSAAAGQGGVATASASGRAAAVRLSARTGEGLDGLRRVLLDIAGWQSAPEGIYTARARHLEALRAVDMHLMEAAAQLQCDGPALDLLAEELRLAQQALNAITGEFTSDDLLGVIFSSFCIGK.

Arg-25, Glu-82, and Lys-135 together coordinate (6S)-5-formyl-5,6,7,8-tetrahydrofolate. In terms of domain architecture, TrmE-type G spans 231 to 404 (GIKVVIAGQP…LRRVLLDIAG (174 aa)). Asn-241 lines the K(+) pocket. GTP is bound by residues 241–246 (NAGKSS), 260–266 (TPIAGTT), 285–288 (DTAG), and 385–387 (SAR). Mg(2+) is bound at residue Ser-245. 3 residues coordinate K(+): Thr-260, Ile-262, and Thr-265. Thr-266 serves as a coordination point for Mg(2+). (6S)-5-formyl-5,6,7,8-tetrahydrofolate is bound at residue Lys-482.

This sequence belongs to the TRAFAC class TrmE-Era-EngA-EngB-Septin-like GTPase superfamily. TrmE GTPase family. As to quaternary structure, homodimer. Heterotetramer of two MnmE and two MnmG subunits. K(+) serves as cofactor.

The protein resides in the cytoplasm. Exhibits a very high intrinsic GTPase hydrolysis rate. Involved in the addition of a carboxymethylaminomethyl (cmnm) group at the wobble position (U34) of certain tRNAs, forming tRNA-cmnm(5)s(2)U34. This is tRNA modification GTPase MnmE from Paracidovorax citrulli (strain AAC00-1) (Acidovorax citrulli).